The sequence spans 367 residues: MSRPQRLTSSSPWDCSGGVFDWDAALRKLDELNARVEDPTLWDRPSEAQAVSRDRASLAARVGAVQELEGGLKDALEYAELADMEGDEALLEDARAQLKDLKDRAGRAELEALLSGEADGNDCYVEINSGAGGTESCDWAGMLLRMYSRWANAHKMSVELVEETAGDQVGIKSATLLVKGANAYGWLKTEAGVHRLVRISPYDAAAKRHTSFASAWVYPVVDDTIEIDINPSDVRTDTYRASGAGGQHINKTDSAVRLTHIPTGIAVACQAGRSQHQNREEAWKMLRARLYEAELQRREAAQQALEDQKTDIGWGHQIRSYVLQPYQMVKDLRTNVETSDTQGVLDGDLDAFMGASLAQRVGATRDA.

At Gln247 the chain carries N5-methylglutamine.

Belongs to the prokaryotic/mitochondrial release factor family. In terms of processing, methylated by PrmC. Methylation increases the termination efficiency of RF2.

It is found in the cytoplasm. Peptide chain release factor 2 directs the termination of translation in response to the peptide chain termination codons UGA and UAA. This Caulobacter sp. (strain K31) protein is Peptide chain release factor 2.